A 100-amino-acid polypeptide reads, in one-letter code: Elicitin Vex2 (100 aa).

Disulfide bonds link Cys-3/Cys-71, Cys-27/Cys-56, and Cys-51/Cys-95.

This sequence belongs to the elicitin family.

The protein localises to the secreted. Its function is as follows. Induces local and distal defense responses (incompatible hypersensitive reaction) in plants from the solanaceae and cruciferae families. Elicits leaf necrosis and causes the accumulation of pathogenesis-related proteins. Might interact with the lipidic molecules of the plasma membrane. The polypeptide is Elicitin Vex2 (Phytopythium vexans (Damping-off fungus)).